The sequence spans 158 residues: Large ribosomal subunit protein bL19 (158 aa).

Positions 119 to 129 (SDRSRVMKDAA) are enriched in basic and acidic residues. Residues 119-158 (SDRSRVMKDAARAQQARDAAQGNSSSETQSSTAAVETQGE) are disordered. The segment covering 130–139 (RAQQARDAAQ) has biased composition (low complexity). The segment covering 140 to 158 (GNSSSETQSSTAAVETQGE) has biased composition (polar residues).

It belongs to the bacterial ribosomal protein bL19 family.

This protein is located at the 30S-50S ribosomal subunit interface and may play a role in the structure and function of the aminoacyl-tRNA binding site. The sequence is that of Large ribosomal subunit protein bL19 from Deinococcus geothermalis (strain DSM 11300 / CIP 105573 / AG-3a).